Reading from the N-terminus, the 507-residue chain is Protein DETOXIFICATION 39 (507 aa).

Helical transmembrane passes span 58–78 (VLFR…GMGI), 92–112 (LAAA…MLGM), 141–161 (IVLA…YPIL), 178–198 (IAGL…QKFL), 209–229 (FISA…VYVM), 233–253 (FMGI…SQCF), 287–307 (AVMI…AGLL), 318–338 (SICM…NAAV), 359–379 (WTAT…VIWF), 403–423 (FLAI…VAVG), 433–453 (VNVG…GFTF), and 459–479 (GIWT…LYVT).

This sequence belongs to the multi antimicrobial extrusion (MATE) (TC 2.A.66.1) family.

The protein localises to the membrane. In Arabidopsis thaliana (Mouse-ear cress), this protein is Protein DETOXIFICATION 39.